The following is a 386-amino-acid chain: MHIHEYQAKTLFRCRDIQIPKGILIDNTTKINDVCKALGGDVWVVKAQIHAGGRGKGGGVIFCHSIEKVERVCNQLLGSKLITPQTDAKGLPVGQLLIEAKQNIERELYLSLLIDRQTHKITVLSSTKGGMDIEKVASKTPDKIIKFGIDPLGSLSVQDCTFLAKKLGFNTELTKQFNNTLLSLYEIFTQKDVNLIEINPLIITQENKLLALDGKIDFDDNALYRHKDIAKLRDISQEDEKERLASEYQLNYILFDGNIGCMVNGAGLAMATMDLIEHFGGSPANFLDVGGGTTADRVAKAFELIQTETNVKSILVNIFGGIVHCDLIAQGILQAIKTVGLTLPIVVRLEGTNAPEGLNLLNKSKFNIHVESDLTKAAIKIVKLTK.

Residues Lys46, Gly53–Gly55, Glu99, Gln102, and Glu107 contribute to the ATP site. Positions 199 and 213 each coordinate Mg(2+). Residues Asn264 and Gly321–Val323 contribute to the substrate site.

Belongs to the succinate/malate CoA ligase beta subunit family. In terms of assembly, heterotetramer of two alpha and two beta subunits. Mg(2+) is required as a cofactor.

It catalyses the reaction succinate + ATP + CoA = succinyl-CoA + ADP + phosphate. It carries out the reaction GTP + succinate + CoA = succinyl-CoA + GDP + phosphate. It functions in the pathway carbohydrate metabolism; tricarboxylic acid cycle; succinate from succinyl-CoA (ligase route): step 1/1. Its function is as follows. Succinyl-CoA synthetase functions in the citric acid cycle (TCA), coupling the hydrolysis of succinyl-CoA to the synthesis of either ATP or GTP and thus represents the only step of substrate-level phosphorylation in the TCA. The beta subunit provides nucleotide specificity of the enzyme and binds the substrate succinate, while the binding sites for coenzyme A and phosphate are found in the alpha subunit. This Ruthia magnifica subsp. Calyptogena magnifica protein is Succinate--CoA ligase [ADP-forming] subunit beta.